A 129-amino-acid polypeptide reads, in one-letter code: Large ribosomal subunit protein bL12 (129 aa).

This sequence belongs to the bacterial ribosomal protein bL12 family. As to quaternary structure, homodimer. Part of the ribosomal stalk of the 50S ribosomal subunit. Forms a multimeric L10(L12)X complex, where L10 forms an elongated spine to which 2 to 4 L12 dimers bind in a sequential fashion. Binds GTP-bound translation factors.

Forms part of the ribosomal stalk which helps the ribosome interact with GTP-bound translation factors. Is thus essential for accurate translation. This Micrococcus luteus (strain ATCC 4698 / DSM 20030 / JCM 1464 / CCM 169 / CCUG 5858 / IAM 1056 / NBRC 3333 / NCIMB 9278 / NCTC 2665 / VKM Ac-2230) (Micrococcus lysodeikticus) protein is Large ribosomal subunit protein bL12.